We begin with the raw amino-acid sequence, 360 residues long: CCA-adding enzyme (360 aa).

Residues glycine 8 and arginine 11 each contribute to the ATP site. CTP-binding residues include glycine 8 and arginine 11. Mg(2+)-binding residues include aspartate 21 and aspartate 23. Residues arginine 91, arginine 137, and arginine 140 each contribute to the ATP site. Arginine 91, arginine 137, and arginine 140 together coordinate CTP.

This sequence belongs to the tRNA nucleotidyltransferase/poly(A) polymerase family. Bacterial CCA-adding enzyme type 2 subfamily. Requires Mg(2+) as cofactor.

It catalyses the reaction a tRNA precursor + 2 CTP + ATP = a tRNA with a 3' CCA end + 3 diphosphate. It carries out the reaction a tRNA with a 3' CCA end + 2 CTP + ATP = a tRNA with a 3' CCACCA end + 3 diphosphate. Its function is as follows. Catalyzes the addition and repair of the essential 3'-terminal CCA sequence in tRNAs without using a nucleic acid template. Adds these three nucleotides in the order of C, C, and A to the tRNA nucleotide-73, using CTP and ATP as substrates and producing inorganic pyrophosphate. tRNA 3'-terminal CCA addition is required both for tRNA processing and repair. Also involved in tRNA surveillance by mediating tandem CCA addition to generate a CCACCA at the 3' terminus of unstable tRNAs. While stable tRNAs receive only 3'-terminal CCA, unstable tRNAs are marked with CCACCA and rapidly degraded. This is CCA-adding enzyme from Francisella tularensis subsp. tularensis (strain FSC 198).